The following is a 37-amino-acid chain: MIEVFLFGIVLGLIPITLAGLFVTAYLQYRRGGRLDV.

The helical transmembrane segment at 5-25 (FLFGIVLGLIPITLAGLFVTA) threads the bilayer.

Belongs to the PetG family. The 4 large subunits of the cytochrome b6-f complex are cytochrome b6, subunit IV (17 kDa polypeptide, PetD), cytochrome f and the Rieske protein, while the 4 small subunits are PetG, PetL, PetM and PetN. The complex functions as a dimer.

The protein localises to the plastid thylakoid membrane. Its function is as follows. Component of the cytochrome b6-f complex, which mediates electron transfer between photosystem II (PSII) and photosystem I (PSI), cyclic electron flow around PSI, and state transitions. PetG is required for either the stability or assembly of the cytochrome b6-f complex. This chain is Cytochrome b6-f complex subunit 5, found in Cuscuta reflexa (Southern Asian dodder).